Consider the following 320-residue polypeptide: Citrate synthase (320 aa).

Catalysis depends on residues H249 and D307.

The protein belongs to the citrate synthase family.

The enzyme catalyses oxaloacetate + acetyl-CoA + H2O = citrate + CoA + H(+). Its pathway is carbohydrate metabolism; tricarboxylic acid cycle; isocitrate from oxaloacetate: step 1/2. The polypeptide is Citrate synthase (gltA) (Bartonella doshiae).